The chain runs to 174 residues: Large ribosomal subunit protein uL10 (174 aa).

Belongs to the universal ribosomal protein uL10 family. In terms of assembly, part of the ribosomal stalk of the 50S ribosomal subunit. The N-terminus interacts with L11 and the large rRNA to form the base of the stalk. The C-terminus forms an elongated spine to which L12 dimers bind in a sequential fashion forming a multimeric L10(L12)X complex.

In terms of biological role, forms part of the ribosomal stalk, playing a central role in the interaction of the ribosome with GTP-bound translation factors. The polypeptide is Large ribosomal subunit protein uL10 (Rubrobacter xylanophilus (strain DSM 9941 / JCM 11954 / NBRC 16129 / PRD-1)).